The following is a 241-amino-acid chain: Eukaryotic translation initiation factor 3 subunit J (241 aa).

Residues 1–94 (MDVSWDADNF…EKTAEEMTPE (94 aa)) are disordered. Residues 26-45 (GEDEDDNVKESWEDEEEEKK) show a composition bias toward acidic residues. Residues 61 to 118 (KKKIHDKIAERERQEREKAERLVTEKTAEEMTPEQKLAEKLRQQKLQEESDLRLAMET) adopt a coiled-coil conformation. The span at 66–89 (DKIAERERQEREKAERLVTEKTAE) shows a compositional bias: basic and acidic residues.

Belongs to the eIF-3 subunit J family. Component of the eukaryotic translation initiation factor 3 (eIF-3) complex.

It localises to the cytoplasm. Its function is as follows. Component of the eukaryotic translation initiation factor 3 (eIF-3) complex, which is involved in protein synthesis of a specialized repertoire of mRNAs and, together with other initiation factors, stimulates binding of mRNA and methionyl-tRNAi to the 40S ribosome. The eIF-3 complex specifically targets and initiates translation of a subset of mRNAs involved in cell proliferation. The polypeptide is Eukaryotic translation initiation factor 3 subunit J (Bombyx mori (Silk moth)).